The primary structure comprises 312 residues: Signal peptidase I (312 aa).

A helical membrane pass occupies residues 7 to 27; the sequence is IFLLTSTFFTGILWIIDHILL. Topologically, residues 28–63 are cytoplasmic; sequence IKNYFYNKKKTKNNNTILINKVILENKKCFFRSLSS. A helical membrane pass occupies residues 64-84; that stretch reads LFPTFFIVFIIRSFIYEPFQI. Over 85 to 312 the chain is Extracellular; the sequence is PSGSMMPTLL…IRIKRIGNIY (228 aa). Active-site residues include Ser-88 and Lys-142.

The protein belongs to the peptidase S26 family.

The protein localises to the cell membrane. The catalysed reaction is Cleavage of hydrophobic, N-terminal signal or leader sequences from secreted and periplasmic proteins.. The sequence is that of Signal peptidase I (lepB) from Buchnera aphidicola subsp. Schizaphis graminum (strain Sg).